A 244-amino-acid polypeptide reads, in one-letter code: 5'-nucleotidase SurE 2 (244 aa).

A divalent metal cation is bound by residues Asp8, Asp9, Ser39, and Asn96.

This sequence belongs to the SurE nucleotidase family. The cofactor is a divalent metal cation.

The protein resides in the cytoplasm. It carries out the reaction a ribonucleoside 5'-phosphate + H2O = a ribonucleoside + phosphate. Its function is as follows. Nucleotidase that shows phosphatase activity on nucleoside 5'-monophosphates. The polypeptide is 5'-nucleotidase SurE 2 (Thermus thermophilus (strain ATCC BAA-163 / DSM 7039 / HB27)).